The sequence spans 433 residues: Mitochondrial inner membrane protein OXA1L (433 aa).

Residues 1–108 are Mitochondrial intermembrane-facing; sequence MARNLVCGRW…QCATEPSFTE (108 aa). A helical transmembrane segment spans residues 109 to 129; the sequence is LGLGSYTPVGLIQNLLEYIHV. Over 130–134 the chain is Mitochondrial matrix; sequence DLGLP. Residues 135-155 traverse the membrane as a helical segment; it reads WWGAIATCTVLARCLVFPLIV. Over 156 to 207 the chain is Mitochondrial intermembrane; the sequence is KGQREAAKIHNHMPEMQKFSARIREAKLAGDQAEFYKATIEMTRYQKKHDIK. Residues 208–228 traverse the membrane as a helical segment; it reads LLRPLILPLTQAPVFISFFIA. The Mitochondrial matrix segment spans residues 229 to 255; sequence LREMANLPVPSLQTGGLWWFQDLTVSD. Residues 256–276 traverse the membrane as a helical segment; sequence PIYVLPLVVTATMWCVLELGA. At 277 to 293 the chain is on the mitochondrial intermembrane side; sequence ETGVQSNDLQFMRNIIR. The chain crosses the membrane as a helical span at residues 294–314; that stretch reads VMPLVVLPVTIHFPSAVFMYW. The Mitochondrial matrix segment spans residues 315–433; that stretch reads LSSNVFSLCQ…AKKPWQDTLG (119 aa). At Ser359 the chain carries Phosphoserine. 2 positions are modified to phosphothreonine: Thr395 and Thr397. The tract at residues 397-433 is disordered; that stretch reads THNPLLQHDPSHPPKAPNSNNSSIKANAKKPWQDTLG. The segment covering 413–426 has biased composition (low complexity); that stretch reads PNSNNSSIKANAKK.

Belongs to the OXA1/ALB3/YidC family. In terms of assembly, monomer; predominantly monomeric at low salt concentrations. Homooligomer; predominantly homooligomeric at high salt concentrations. Associates with the mitochondrial ribosome. Associates preferentially as a dimer with the large ribosomal subunit 39S of the mitochondrial ribosome. Interacts with OXA1L; promoting cotranslational quality control in mitochondria.

The protein localises to the mitochondrion inner membrane. Mitochondrial membrane insertase that mediates the cotranslational insertion of integral membrane proteins into the mitochondrial inner membrane. Essential for the activity and assembly of cytochrome oxidase. Required for the correct biogenesis of ATP synthase and complex I in mitochondria. The chain is Mitochondrial inner membrane protein OXA1L (Oxa1l) from Mus musculus (Mouse).